We begin with the raw amino-acid sequence, 280 residues long: Ribosomal protein L11 methyltransferase (280 aa).

Positions 130, 151, 172, and 213 each coordinate S-adenosyl-L-methionine.

The protein belongs to the methyltransferase superfamily. PrmA family.

It localises to the cytoplasm. The enzyme catalyses L-lysyl-[protein] + 3 S-adenosyl-L-methionine = N(6),N(6),N(6)-trimethyl-L-lysyl-[protein] + 3 S-adenosyl-L-homocysteine + 3 H(+). Its function is as follows. Methylates ribosomal protein L11. This Nitratiruptor sp. (strain SB155-2) protein is Ribosomal protein L11 methyltransferase.